Consider the following 671-residue polypeptide: DNA ligase (671 aa).

NAD(+)-binding positions include 32 to 36, 81 to 82, and Glu113; these read DAEYD and SL. Lys115 functions as the N6-AMP-lysine intermediate in the catalytic mechanism. NAD(+)-binding residues include Arg136, Glu173, Lys290, and Lys314. Zn(2+) is bound by residues Cys408, Cys411, Cys426, and Cys432. Positions 593–671 constitute a BRCT domain; that stretch reads EIDSPFAGKT…EAEMIRLLGA (79 aa).

Belongs to the NAD-dependent DNA ligase family. LigA subfamily. The cofactor is Mg(2+). Mn(2+) is required as a cofactor.

The catalysed reaction is NAD(+) + (deoxyribonucleotide)n-3'-hydroxyl + 5'-phospho-(deoxyribonucleotide)m = (deoxyribonucleotide)n+m + AMP + beta-nicotinamide D-nucleotide.. In terms of biological role, DNA ligase that catalyzes the formation of phosphodiester linkages between 5'-phosphoryl and 3'-hydroxyl groups in double-stranded DNA using NAD as a coenzyme and as the energy source for the reaction. It is essential for DNA replication and repair of damaged DNA. This chain is DNA ligase, found in Salmonella choleraesuis (strain SC-B67).